The following is a 197-amino-acid chain: Imidazoleglycerol-phosphate dehydratase (197 aa).

This sequence belongs to the imidazoleglycerol-phosphate dehydratase family.

It is found in the cytoplasm. The enzyme catalyses D-erythro-1-(imidazol-4-yl)glycerol 3-phosphate = 3-(imidazol-4-yl)-2-oxopropyl phosphate + H2O. It functions in the pathway amino-acid biosynthesis; L-histidine biosynthesis; L-histidine from 5-phospho-alpha-D-ribose 1-diphosphate: step 6/9. The sequence is that of Imidazoleglycerol-phosphate dehydratase from Bradyrhizobium sp. (strain BTAi1 / ATCC BAA-1182).